We begin with the raw amino-acid sequence, 660 residues long: Putative ABC transporter ATP-binding MG390 (660 aa).

The region spanning 6 to 126 (QEQQNECGIC…KLWTGYAATV (121 aa)) is the Peptidase C39 domain. The active site involves cysteine 12. 6 consecutive transmembrane segments (helical) span residues 150-170 (LVTFYVFIELIIIGISTLLAT), 188-208 (LVVLVVYFSCLKGLNLLLQVI), 265-285 (YIPNLIISCVVALIIGVLIGI), 290-310 (FLLIAIAQIVVNAGLFCYDFF), 379-399 (SFFQQGFDFAILGLGVIGIIE), and 402-422 (YQLSFLFYVFGIQSLFSTYAT). The ABC transporter domain maps to 464 to 657 (ISLENLSVTL…QNKINLTNYL (194 aa)). 494-501 (GQNGSGKS) contacts ATP.

It belongs to the ABC transporter superfamily.

Its subcellular location is the cell membrane. This chain is Putative ABC transporter ATP-binding MG390, found in Mycoplasma genitalium (strain ATCC 33530 / DSM 19775 / NCTC 10195 / G37) (Mycoplasmoides genitalium).